We begin with the raw amino-acid sequence, 327 residues long: Glycerol-3-phosphate dehydrogenase [NAD(P)+] (327 aa).

3 residues coordinate NADPH: Trp11, Arg30, and Lys103. Sn-glycerol 3-phosphate-binding residues include Lys103, Gly131, and Ser133. Position 135 (Ala135) interacts with NADPH. Positions 186, 243, 253, 254, and 255 each coordinate sn-glycerol 3-phosphate. Lys186 acts as the Proton acceptor in catalysis. Arg254 serves as a coordination point for NADPH. Positions 281 and 283 each coordinate NADPH.

It belongs to the NAD-dependent glycerol-3-phosphate dehydrogenase family.

The protein localises to the cytoplasm. The catalysed reaction is sn-glycerol 3-phosphate + NAD(+) = dihydroxyacetone phosphate + NADH + H(+). It catalyses the reaction sn-glycerol 3-phosphate + NADP(+) = dihydroxyacetone phosphate + NADPH + H(+). The protein operates within membrane lipid metabolism; glycerophospholipid metabolism. In terms of biological role, catalyzes the reduction of the glycolytic intermediate dihydroxyacetone phosphate (DHAP) to sn-glycerol 3-phosphate (G3P), the key precursor for phospholipid synthesis. This is Glycerol-3-phosphate dehydrogenase [NAD(P)+] from Wolbachia sp. subsp. Drosophila simulans (strain wRi).